A 296-amino-acid chain; its full sequence is Cation-efflux pump FieF (296 aa).

Residues 1–18 (MTQTSQYDFWVKLASRAS) lie on the Cytoplasmic side of the membrane. Residues 19 to 32 (VATALTLITIKLLA) traverse the membrane as a helical segment. The Periplasmic portion of the chain corresponds to 33–43 (WLYSGSASMLA). Residues 44 to 60 (SLTDSFADTLASIINFI) traverse the membrane as a helical segment. The Zn(2+) site is built by Asp47, Asp51, Asp70, His73, and His77. Residues 61–83 (AIRYAIVPADHDHRYGHGKAEPL) lie on the Cytoplasmic side of the membrane. A helical membrane pass occupies residues 84–105 (AALAQSAFIMGSAFLLLFYGGE). Over 106–119 (RLLNPSPVENATLG) the chain is Periplasmic. The helical transmembrane segment at 120–138 (VVVSVVAIVLTLALVLLQK) threads the bilayer. Residues 139–145 (RALAATN) lie on the Cytoplasmic side of the membrane. A helical membrane pass occupies residues 146–160 (STVVEADSLHYKSDL). His155 and Asp159 together coordinate Zn(2+). Residues 161 to 180 (FLNAAVLLALVLSQYGWWWA) are Periplasmic-facing. The chain crosses the membrane as a helical span at residues 181–200 (DGLFAVLIACYIGQQAFDLG). The Cytoplasmic segment spans residues 201–296 (YRSIQALLDR…DPVQVEPTTQ (96 aa)). Zn(2+) is bound by residues His234, Asp235, His250, His263, His285, and Asp287.

Belongs to the cation diffusion facilitator (CDF) transporter (TC 2.A.4) family. FieF subfamily. In terms of assembly, homodimer. The subunits are held together in a parallel orientation through zinc binding at the interface of the cytoplasmic domains.

The protein resides in the cell inner membrane. The catalysed reaction is Zn(2+)(in) + H(+)(out) = Zn(2+)(out) + H(+)(in). It carries out the reaction Cd(2+)(in) + H(+)(out) = Cd(2+)(out) + H(+)(in). The enzyme catalyses Fe(2+)(in) + H(+)(out) = Fe(2+)(out) + H(+)(in). Cytoplasmic zinc binding may trigger movements of two electrically repulsive cytoplasmic domains and reorient transmembrane helices, thereby modulating coordination geometry of the active site for zinc transport. It may modulate activity in response to cytoplasmic metal fluctuations. In terms of biological role, divalent metal cation transporter which exports Zn(2+), Cd(2+) and possibly Fe(2+). Zn(2+)/H(+) antiporter capable of using the proton motive force to remove Zn(2+) from the cytoplasm. May be involved in zinc and iron detoxification by efflux. This Shewanella oneidensis (strain ATCC 700550 / JCM 31522 / CIP 106686 / LMG 19005 / NCIMB 14063 / MR-1) protein is Cation-efflux pump FieF.